Consider the following 210-residue polypeptide: Thymidylate kinase (210 aa).

Residue 10–17 coordinates ATP; it reads GPEGAGKS.

The protein belongs to the thymidylate kinase family.

The catalysed reaction is dTMP + ATP = dTDP + ADP. Its function is as follows. Phosphorylation of dTMP to form dTDP in both de novo and salvage pathways of dTTP synthesis. The sequence is that of Thymidylate kinase from Ectopseudomonas mendocina (strain ymp) (Pseudomonas mendocina).